Reading from the N-terminus, the 947-residue chain is Protein translocase subunit SecA (947 aa).

ATP-binding positions include Gln-87, 105–109, and Asp-525; that span reads GEGKT. Residues 905–928 are disordered; it reads PADNADKTARNPNDPSTWGKVGRN. Positions 931, 933, 942, and 943 each coordinate Zn(2+).

It belongs to the SecA family. Monomer and homodimer. Part of the essential Sec protein translocation apparatus which comprises SecA, SecYEG and auxiliary proteins SecDF-YajC and YidC. It depends on Zn(2+) as a cofactor.

Its subcellular location is the cell inner membrane. It is found in the cytoplasm. It catalyses the reaction ATP + H2O + cellular proteinSide 1 = ADP + phosphate + cellular proteinSide 2.. In terms of biological role, part of the Sec protein translocase complex. Interacts with the SecYEG preprotein conducting channel. Has a central role in coupling the hydrolysis of ATP to the transfer of proteins into and across the cell membrane, serving both as a receptor for the preprotein-SecB complex and as an ATP-driven molecular motor driving the stepwise translocation of polypeptide chains across the membrane. In Rhodopseudomonas palustris (strain BisB18), this protein is Protein translocase subunit SecA.